A 67-amino-acid chain; its full sequence is Small ribosomal subunit protein eS17 (67 aa).

It belongs to the eukaryotic ribosomal protein eS17 family.

The polypeptide is Small ribosomal subunit protein eS17 (Thermococcus gammatolerans (strain DSM 15229 / JCM 11827 / EJ3)).